The following is a 750-amino-acid chain: uncharacterized protein (750 aa).

This is an uncharacterized protein from Escherichia coli O157:H7.